The sequence spans 397 residues: Linalool dehydratase/isomerase (397 aa).

Residues M1 to A26 form the signal peptide. The active-site Proton donor/acceptor is D64. Disulfide bonds link C74/C127 and C196/C205. C196 is a binding site for (2E)-geraniol.

Homotetramer. Homopentamer.

Its subcellular location is the periplasm. It catalyses the reaction (S)-linalool = beta-myrcene + H2O. The enzyme catalyses (2E)-geraniol = (S)-linalool. It participates in terpene metabolism; monoterpene degradation. With respect to regulation, is inhibited by molecular oxygen, high salt concentrations (NaCl, KCl, or MgCl(2)), urea, and Ti(III)citrate. Activity is not affected by EDTA. Functionally, anaerobically catalyzes the stereospecific hydration of beta-myrcene to (3S)-linalool and the isomerization of (3S)-linalool to geraniol. Is thus involved in the initial steps of the anaerobic degradation of the monoterpene beta-myrcene. Also catalyzes the reverse reactions, i.e. the isomerization of geraniol to linalool and the dehydration of linalool to myrcene. In this direction, the formation of myrcene from geraniol may be seen as a detoxification process for the monoterpene alcohol. Shows a relatively broad substrate specificity and can use various geraniol and linalool derivatives. Substrates required a specific alpha-methylallyl alcohol signature motif. Neither the monoterpenes alpha- and beta-ocimene nor the monoterpenoids citronellol and nerol can be used as substrates. The protein is Linalool dehydratase/isomerase of Castellaniella defragrans (strain DSM 12143 / CCUG 39792 / 65Phen) (Alcaligenes defragrans).